A 334-amino-acid polypeptide reads, in one-letter code: Phosphate acyltransferase (334 aa).

The protein belongs to the PlsX family. In terms of assembly, homodimer. Probably interacts with PlsY.

The protein localises to the cytoplasm. It catalyses the reaction a fatty acyl-[ACP] + phosphate = an acyl phosphate + holo-[ACP]. It functions in the pathway lipid metabolism; phospholipid metabolism. In terms of biological role, catalyzes the reversible formation of acyl-phosphate (acyl-PO(4)) from acyl-[acyl-carrier-protein] (acyl-ACP). This enzyme utilizes acyl-ACP as fatty acyl donor, but not acyl-CoA. The chain is Phosphate acyltransferase from Clostridium kluyveri (strain NBRC 12016).